Reading from the N-terminus, the 457-residue chain is Siroheme synthase (457 aa).

The segment at 1–204 (MDHLPIFCQL…NDQKAITETT (204 aa)) is precorrin-2 dehydrogenase /sirohydrochlorin ferrochelatase. NAD(+) is bound by residues 22 to 23 (DV) and 43 to 44 (LA). Ser128 is subject to Phosphoserine. The uroporphyrinogen-III C-methyltransferase stretch occupies residues 216-457 (GEVVLVGAGP…RDKLNWFSNH (242 aa)). An S-adenosyl-L-methionine-binding site is contributed by Pro225. The active-site Proton acceptor is the Asp248. The active-site Proton donor is Lys270. S-adenosyl-L-methionine is bound by residues 301–303 (GGD), Ile306, 331–332 (TA), Met382, and Gly411.

It in the N-terminal section; belongs to the precorrin-2 dehydrogenase / sirohydrochlorin ferrochelatase family. This sequence in the C-terminal section; belongs to the precorrin methyltransferase family.

The catalysed reaction is uroporphyrinogen III + 2 S-adenosyl-L-methionine = precorrin-2 + 2 S-adenosyl-L-homocysteine + H(+). It carries out the reaction precorrin-2 + NAD(+) = sirohydrochlorin + NADH + 2 H(+). It catalyses the reaction siroheme + 2 H(+) = sirohydrochlorin + Fe(2+). The protein operates within cofactor biosynthesis; adenosylcobalamin biosynthesis; precorrin-2 from uroporphyrinogen III: step 1/1. It functions in the pathway cofactor biosynthesis; adenosylcobalamin biosynthesis; sirohydrochlorin from precorrin-2: step 1/1. It participates in porphyrin-containing compound metabolism; siroheme biosynthesis; precorrin-2 from uroporphyrinogen III: step 1/1. Its pathway is porphyrin-containing compound metabolism; siroheme biosynthesis; siroheme from sirohydrochlorin: step 1/1. The protein operates within porphyrin-containing compound metabolism; siroheme biosynthesis; sirohydrochlorin from precorrin-2: step 1/1. Its function is as follows. Multifunctional enzyme that catalyzes the SAM-dependent methylations of uroporphyrinogen III at position C-2 and C-7 to form precorrin-2 via precorrin-1. Then it catalyzes the NAD-dependent ring dehydrogenation of precorrin-2 to yield sirohydrochlorin. Finally, it catalyzes the ferrochelation of sirohydrochlorin to yield siroheme. In Escherichia coli O6:K15:H31 (strain 536 / UPEC), this protein is Siroheme synthase.